Reading from the N-terminus, the 270-residue chain is Phosphatidylglycerol--prolipoprotein diacylglyceryl transferase (270 aa).

4 helical membrane passes run 19–39 (FPVYWYGIIIGTGVLLGLWLA), 56–76 (LVLIAVPIAILFARMYYVIFE), 92–112 (QGGLAIHGGLIGAVITGILFA), and 116–136 (GVSFWKLADIAAPSILLGQAI). Position 138 (Arg-138) interacts with a 1,2-diacyl-sn-glycero-3-phospho-(1'-sn-glycerol). The next 3 membrane-spanning stretches (helical) occupy residues 178–198 (HPTFLYESLWNFVGVILLLAL), 206–226 (GELFFTYLIWYSVGRFFVEGL), and 236–256 (LRIAQVMSIGLVVISIIFIIV).

This sequence belongs to the Lgt family.

The protein localises to the cell membrane. It carries out the reaction L-cysteinyl-[prolipoprotein] + a 1,2-diacyl-sn-glycero-3-phospho-(1'-sn-glycerol) = an S-1,2-diacyl-sn-glyceryl-L-cysteinyl-[prolipoprotein] + sn-glycerol 1-phosphate + H(+). It functions in the pathway protein modification; lipoprotein biosynthesis (diacylglyceryl transfer). Functionally, catalyzes the transfer of the diacylglyceryl group from phosphatidylglycerol to the sulfhydryl group of the N-terminal cysteine of a prolipoprotein, the first step in the formation of mature lipoproteins. The chain is Phosphatidylglycerol--prolipoprotein diacylglyceryl transferase from Bacillus cereus (strain G9842).